The primary structure comprises 98 residues: Protein S100-A13 (98 aa).

Residues 18–53 form the EF-hand domain; the sequence is STFFTFAGREGRKGSLNINEFKELATQQLPHLLKDV. Residues S32, E37, D64, N66, D68, E70, and E75 each contribute to the Ca(2+) site. The residue at position 32 (S32) is a Phosphoserine.

This sequence belongs to the S-100 family. In terms of assembly, homodimer. Part of a copper-dependent multiprotein complex containing S100A13, FGF1 and SYT1. Interacts with FGF1 and SYT1. Interacts with IL1A.

Its subcellular location is the cytoplasm. The protein resides in the secreted. Functionally, plays a role in the export of proteins that lack a signal peptide and are secreted by an alternative pathway. Binds two calcium ions per subunit. Binds one copper ion. Binding of one copper ion does not interfere with calcium binding. Required for the copper-dependent stress-induced export of IL1A and FGF1. The calcium-free protein binds to lipid vesicles containing phosphatidylserine, but not to vesicles containing phosphatidylcholine. The protein is Protein S100-A13 (S100a13) of Mus musculus (Mouse).